The following is a 324-amino-acid chain: Pseudouridine-5'-phosphate glycosidase (324 aa).

The active-site Proton donor is the E43. The substrate site is built by K104 and V124. D156 serves as a coordination point for Mn(2+). Residue 158–160 participates in substrate binding; sequence SAD. The active-site Nucleophile is K177.

The protein belongs to the pseudouridine-5'-phosphate glycosidase family. Homotrimer. Mn(2+) serves as cofactor.

It catalyses the reaction D-ribose 5-phosphate + uracil = psi-UMP + H2O. Catalyzes the reversible cleavage of pseudouridine 5'-phosphate (PsiMP) to ribose 5-phosphate and uracil. Functions biologically in the cleavage direction, as part of a pseudouridine degradation pathway. The chain is Pseudouridine-5'-phosphate glycosidase from Salinispora tropica (strain ATCC BAA-916 / DSM 44818 / JCM 13857 / NBRC 105044 / CNB-440).